Consider the following 97-residue polypeptide: Vitelline membrane protein 15a-2 (97 aa).

The first 19 residues, 1–19, serve as a signal peptide directing secretion; that stretch reads MNKIIAALVLFTAVIGALA. The segment at 20–23 is required for binding to the gut receptor; it reads DYPA. The disordered stretch occupies residues 26-46; it reads PPPPKPYHAPPPPPYHAPPHH. The region spanning 61 to 97 is the VM domain; that stretch reads KAPAAKCGANLLVGCAPSVAHVPCVPVHPHPPPPAHY.

Belongs to the vitelline membrane protein family. As to expression, expressed in the anterior region of the follicle cells.

Its subcellular location is the secreted. Functionally, has an oostatic activity. Inhibits trypsin biosynthesis in the midgut epithelial cells which indirectly reduces the vitellogenin concentration in the hemolymph resulting in inhibition of oocyte development. The chain is Vitelline membrane protein 15a-2 (15a-2) from Aedes aegypti (Yellowfever mosquito).